A 349-amino-acid chain; its full sequence is KH domain-containing, RNA-binding, signal transduction-associated protein 2 (349 aa).

In terms of domain architecture, KH spans 65 to 135 (LIPVKQYPKF…HLSDELHVLI (71 aa)). Disordered stretches follow at residues 182 to 284 (EDSG…DDQT) and 319 to 349 (PEEWATTRSSLKAPPQRSARGGYREHPYGRY). Omega-N-methylarginine is present on residues R230 and R240. The span at 340 to 349 (GYREHPYGRY) shows a compositional bias: basic and acidic residues.

It belongs to the KHDRBS family. In terms of assembly, self-associates to form homooligomers. Interacts with KHDRBS1/SAM68; heterooligomer formation of KHDRBS family proteins may modulate RNA substrate specificity. Interacts with RBMX. Interacts with SAFB, SFRS9 and YTHDC1. Interacts with FYN and PLCG1 (via SH3 domain). Interacts (phosphorylated) with FYN, GRB2, PLCG1 and RASA1 (via SH2 domain). Methylated. Post-translationally, tyrosine phosphorylated by FYN, PTK6 and SRC. Tyrosine phosphorylated by SRC during mitosis. As to expression, highly expressed in brain, lung, kidney and small intestine. Weakly expressed in placenta, liver, spleen, thymus, ovary and colon.

The protein resides in the nucleus. Its function is as follows. RNA-binding protein that plays a role in the regulation of alternative splicing and influences mRNA splice site selection and exon inclusion. Binds both poly(A) and poly(U) homopolymers. Phosphorylation by PTK6 inhibits its RNA-binding ability. Induces an increased concentration-dependent incorporation of exon in CD44 pre-mRNA by direct binding to purine-rich exonic enhancer. Can regulate alternative splicing of NRXN1 in the laminin G-like domain 6 containing the evolutionary conserved neurexin alternative spliced segment 4 (AS4) involved in neurexin selective targeting to postsynaptic partners. Regulates cell-type specific alternative splicing of NRXN1 at AS4 and acts synergystically with SAM68 in exon skipping. In contrast acts antagonistically with SAM68 in NRXN3 exon skipping at AS4. Its phosphorylation by FYN inhibits its ability to regulate splice site selection. May function as an adapter protein for Src kinases during mitosis. This is KH domain-containing, RNA-binding, signal transduction-associated protein 2 (KHDRBS2) from Homo sapiens (Human).